A 511-amino-acid chain; its full sequence is Peptide transporter YePEPT (511 aa).

The Cytoplasmic portion of the chain corresponds to 1–19; that stretch reads MQTSTNTPGGRTFFGHPYP. Residues 20-45 traverse the membrane as a helical segment; it reads LSGLFLSEMWERFSFYGIRPLLILFM. The Periplasmic segment spans residues 46–59; the sequence is AATVFDGGMGLPRE. The helical transmembrane segment at 60–84 threads the bilayer; sequence QASAIVGIFAGSMYLAALPGGLLAD. At 85 to 88 the chain is on the cytoplasmic side; sequence NWLG. The chain crosses the membrane as a helical span at residues 89 to 109; the sequence is QQRAVWYGSILIALGHLSIAL. Residues 110 to 115 are Periplasmic-facing; it reads SAFFGN. The chain crosses the membrane as a helical span at residues 116–138; it reads DLFFIGLVFIVLGTGLFKTCISV. Residues 139 to 149 are Cytoplasmic-facing; it reads MVGTLYKPGDA. The chain crosses the membrane as a helical span at residues 150-175; the sequence is RRDGGFSLFYMGINMGSFIAPLLSGW. At 176 to 181 the chain is on the periplasmic side; it reads LLRTHG. A helical membrane pass occupies residues 182 to 208; it reads WHWGFGIGGIGMLVALLIFRGFAIPAM. Topologically, residues 209–232 are cytoplasmic; it reads KRYDAEVGLDSSWNKPTNQRQGVG. Residues 233–253 traverse the membrane as a helical segment; the sequence is RWVTAIMAVVVVIIALISQGV. The Periplasmic portion of the chain corresponds to 254-256; the sequence is IPI. A helical transmembrane segment spans residues 257–279; that stretch reads NPVMIASLLVYVIAASVTLYFIY. Residues 280 to 294 are Cytoplasmic-facing; that stretch reads LFAFAKMSRKDRARL. A helical transmembrane segment spans residues 295–321; sequence LVCFILLVSAAFFWSAFEQKPTSFNLF. The Periplasmic segment spans residues 322 to 335; the sequence is ANDYTDRMVMGFEI. The chain crosses the membrane as a helical span at residues 336–357; it reads PTVWFQSINALFIILLAPVFSW. Residues 358–369 are Cytoplasmic-facing; it reads AWPALAKKKIQP. A helical membrane pass occupies residues 370-396; sequence SSITKFVIGILCAAAGFAVMMYAAQHV. The Periplasmic portion of the chain corresponds to 397 to 405; sequence LSSGGAGVS. Residues 406–426 traverse the membrane as a helical segment; sequence PLWLVMSILLLTLGELCLSPI. Residues 427–441 lie on the Cytoplasmic side of the membrane; it reads GLATMTLLAPDRMRG. Residues 442–462 traverse the membrane as a helical segment; the sequence is QVMGLWFCASSLGNLAAGLIG. Residues 463–471 lie on the Periplasmic side of the membrane; the sequence is GHVKADQLD. The chain crosses the membrane as a helical span at residues 472 to 496; it reads MLPTLFARCSIALVICAAVLILLIV. Residues 497 to 511 are Cytoplasmic-facing; sequence PIRRLMNNTQGQQTA.

The protein belongs to the major facilitator superfamily. Proton-dependent oligopeptide transporter (POT/PTR) (TC 2.A.17) family.

It is found in the cell inner membrane. Transport is inhibited by the proton ionophore carbonyl cyanide m-chlorophenylhydrazone (CCCP). In terms of biological role, mediates the proton-dependent uptake of dipeptides. Shows higher affinity for dipeptides with a negatively charged amino acid residue at the N-terminal position, such as Asp-Ala and Glu-Ala. Also displays specificity for Ala-Ala, Ala-Tyr and Tyr-Ala. The chain is Peptide transporter YePEPT from Yersinia enterocolitica subsp. palearctica serotype O:3 (strain YE-P4).